The following is a 215-amino-acid chain: Pyridoxine/pyridoxamine 5'-phosphate oxidase (215 aa).

Substrate-binding positions include 11-14 (RRDY) and Lys69. FMN-binding positions include 64–69 (RVVLLK), 79–80 (YT), Lys86, and Gln108. Positions 126, 130, and 134 each coordinate substrate. Residues 143-144 (QS) and Trp188 contribute to the FMN site. 194-196 (RLH) is a substrate binding site. Arg198 lines the FMN pocket.

It belongs to the pyridoxamine 5'-phosphate oxidase family. Homodimer. FMN serves as cofactor.

It carries out the reaction pyridoxamine 5'-phosphate + O2 + H2O = pyridoxal 5'-phosphate + H2O2 + NH4(+). The catalysed reaction is pyridoxine 5'-phosphate + O2 = pyridoxal 5'-phosphate + H2O2. It participates in cofactor metabolism; pyridoxal 5'-phosphate salvage; pyridoxal 5'-phosphate from pyridoxamine 5'-phosphate: step 1/1. The protein operates within cofactor metabolism; pyridoxal 5'-phosphate salvage; pyridoxal 5'-phosphate from pyridoxine 5'-phosphate: step 1/1. Catalyzes the oxidation of either pyridoxine 5'-phosphate (PNP) or pyridoxamine 5'-phosphate (PMP) into pyridoxal 5'-phosphate (PLP). The protein is Pyridoxine/pyridoxamine 5'-phosphate oxidase of Legionella pneumophila (strain Paris).